Reading from the N-terminus, the 732-residue chain is Adducin-related protein 1 (732 aa).

Disordered regions lie at residues 1–22 and 684–732; these read MIGR…DPEY and TRFS…KKDK. The span at 685–705 shows a compositional bias: polar residues; sequence RFSSTQGTSEGNTTSRSCTTA. The span at 716–732 shows a compositional bias: basic residues; sequence KKKKKKGFLSFMRKKDK.

This sequence belongs to the aldolase class II family. Adducin subfamily.

It localises to the cytoplasm. It is found in the cytoskeleton. Its subcellular location is the cell membrane. Membrane-cytoskeleton-associated protein that promotes the assembly of the spectrin-actin network. Plays a role in time-dependent memmory loss and the retention of conditioned behavior over time. This Caenorhabditis elegans protein is Adducin-related protein 1.